The chain runs to 368 residues: Metacaspase-6 (368 aa).

Active-site residues include H86 and C139. C139 carries the post-translational modification S-nitrosocysteine. The disordered stretch occupies residues 153–174 (GESTKKKKDSGDSSTINKETEA).

This sequence belongs to the peptidase C14B family. Post-translationally, proteolytically processed; by an autocatalytic mechanism. As to expression, expressed in roots and flower buds.

In Arabidopsis thaliana (Mouse-ear cress), this protein is Metacaspase-6 (AMC6).